We begin with the raw amino-acid sequence, 172 residues long: MVDKRESYTKEDLLASSRGELFGPQGPQLPAPNMLMMDRVVKMTEDGGKYGKGYVEAELDITPDLWFFGCHFIGDPVMPGCLGLDAMWQLVGFYLGWLGGEGKGRALGVGEVKFTGQVLPTAKKVTYRIHFKRVINRRLVMGIADGEVLVDGQQIYTADELKVGLFKDTSSF.

The active site involves His-71.

Belongs to the thioester dehydratase family. FabA subfamily. In terms of assembly, homodimer.

The protein resides in the cytoplasm. It carries out the reaction a (3R)-hydroxyacyl-[ACP] = a (2E)-enoyl-[ACP] + H2O. The enzyme catalyses (3R)-hydroxydecanoyl-[ACP] = (2E)-decenoyl-[ACP] + H2O. It catalyses the reaction (2E)-decenoyl-[ACP] = (3Z)-decenoyl-[ACP]. Its pathway is lipid metabolism; fatty acid biosynthesis. Functionally, necessary for the introduction of cis unsaturation into fatty acids. Catalyzes the dehydration of (3R)-3-hydroxydecanoyl-ACP to E-(2)-decenoyl-ACP and then its isomerization to Z-(3)-decenoyl-ACP. Can catalyze the dehydratase reaction for beta-hydroxyacyl-ACPs with saturated chain lengths up to 16:0, being most active on intermediate chain length. In Pectobacterium carotovorum subsp. carotovorum (strain PC1), this protein is 3-hydroxydecanoyl-[acyl-carrier-protein] dehydratase.